Reading from the N-terminus, the 75-residue chain is Small ribosomal subunit protein bS18c (75 aa).

It belongs to the bacterial ribosomal protein bS18 family. Part of the 30S ribosomal subunit.

It localises to the plastid. The protein resides in the chloroplast. In Marchantia polymorpha (Common liverwort), this protein is Small ribosomal subunit protein bS18c (rps18).